The following is a 138-amino-acid chain: Nucleoside diphosphate kinase (138 aa).

Positions 9, 57, 85, 91, 102, and 112 each coordinate ATP. Residue His-115 is the Pros-phosphohistidine intermediate of the active site.

Belongs to the NDK family. Homotetramer. Mg(2+) serves as cofactor.

It is found in the cytoplasm. The enzyme catalyses a 2'-deoxyribonucleoside 5'-diphosphate + ATP = a 2'-deoxyribonucleoside 5'-triphosphate + ADP. It catalyses the reaction a ribonucleoside 5'-diphosphate + ATP = a ribonucleoside 5'-triphosphate + ADP. Functionally, major role in the synthesis of nucleoside triphosphates other than ATP. The ATP gamma phosphate is transferred to the NDP beta phosphate via a ping-pong mechanism, using a phosphorylated active-site intermediate. This is Nucleoside diphosphate kinase from Desulfatibacillum aliphaticivorans.